The primary structure comprises 277 residues: Shikimate dehydrogenase (NADP(+)) (277 aa).

Shikimate contacts are provided by residues 15 to 17 and T64; that span reads SKS. K68 functions as the Proton acceptor in the catalytic mechanism. Residues N89 and D104 each coordinate shikimate. NADP(+) is bound by residues 129–133, 153–158, and M217; these read GAGGA and NRTAKR. Y219 serves as a coordination point for shikimate. NADP(+) is bound at residue G242.

This sequence belongs to the shikimate dehydrogenase family. In terms of assembly, homodimer.

It catalyses the reaction shikimate + NADP(+) = 3-dehydroshikimate + NADPH + H(+). The protein operates within metabolic intermediate biosynthesis; chorismate biosynthesis; chorismate from D-erythrose 4-phosphate and phosphoenolpyruvate: step 4/7. Its function is as follows. Involved in the biosynthesis of the chorismate, which leads to the biosynthesis of aromatic amino acids. Catalyzes the reversible NADPH linked reduction of 3-dehydroshikimate (DHSA) to yield shikimate (SA). The protein is Shikimate dehydrogenase (NADP(+)) of Hydrogenovibrio crunogenus (strain DSM 25203 / XCL-2) (Thiomicrospira crunogena).